A 412-amino-acid chain; its full sequence is POU domain, class 4, transcription factor 2 (412 aa).

Positions 29–96 (LHSASPGSSA…SEAMRRACLP (68 aa)) are disordered. Residues 31–53 (SASPGSSAPAAPSASSPSSSSNA) are compositionally biased toward low complexity. Composition is skewed to gly residues over residues 54–70 (GSGG…GGGR) and 78–87 (GSGGGGGGGS). The required for transcriptional activation stretch occupies residues 94–240 (CLPTPPSNIF…MHQAALSMAH (147 aa)). A POU-IV box motif is present at residues 113 to 122 (RAEALAAVDI). The disordered stretch occupies residues 123–191 (VSQSKSHHHH…HHHHQPHQAL (69 aa)). Basic residues predominate over residues 127–138 (KSHHHHPPHHSP). The span at 152-169 (PCTSAASSSSVPISHPSA) shows a compositional bias: low complexity. Over residues 173–187 (THHHHHHHHHHHHQP) the composition is skewed to basic residues. Positions 174–188 (HHHHHHHHHHHHQPH) match the Nuclear speckle targeting signal motif. The tract at residues 241-412 (AHGLPSHMGC…QKRMKYSAGI (172 aa)) is required for DNA-binding and transcriptional repression. The POU-specific domain maps to 253–330 (DVDADPRDLE…ILQAWLEEAE (78 aa)). Residues 348–407 (KKRKRTSIAAPEKRSLEAYFAIQPRPSSEKIAAIAEKLDLKKNVVRVWFCNQRQKQKRMK) constitute a DNA-binding region (homeobox).

The protein belongs to the POU transcription factor family. Class-4 subfamily. Interacts with POU4F1; this interaction inhibits both POU4F1 DNA-binding and transcriptional activities. Interacts (C-terminus) with ESR1 (via DNA-binding domain); this interaction increases the estrogen receptor ESR1 transcriptional activity in a DNA- and ligand 17-beta-estradiol-independent manner. Interacts (via C-terminus) with TP53 (via N-terminus). Interacts with DLX1 (via homeobox DNA-binding domain); this interaction suppresses DLX1-mediated transcriptional activity in postnatal retina enhancing retinal ganglion cell (RGC) differentiation. Interacts with DLX2 (via homeobox DNA-binding domain); this interaction enhances RGC differentiation. Interacts (via C-terminus) with ISL1 (via C-terminus). Interacts with ISL2. Interacts with LHX2. Expressed in the heart, brain and spinal cord. Expressed in cardiomyocytes (at protein level). Expressed in brain and spinal cord. Expressed in dorsal root ganglion (RGD) neurons.

It is found in the nucleus. The protein localises to the nucleus speckle. Its subcellular location is the cytoplasm. In terms of biological role, tissue-specific DNA-binding transcription factor involved in the development and differentiation of target cells. Functions either as activator or repressor modulating the rate of target gene transcription through RNA polymerase II enzyme in a promoter-dependent manner. Binds to the consensus octamer motif 5'-AT[A/T]A[T/A]T[A/T]A-3' of promoter of target genes. Plays a fundamental role in the gene regulatory network essential for retinal ganglion cell (RGC) differentiation. Binds to an octamer site to form a ternary complex with ISL1; cooperates positively with ISL1 and ISL2 to potentiate transcriptional activation of RGC target genes being involved in RGC fate commitment in the developing retina and RGC axon formation and pathfinding. Inhibits DLX1 and DLX2 transcriptional activities preventing DLX1- and DLX2-mediated ability to promote amacrine cell fate specification. In cooperation with TP53 potentiates transcriptional activation of BAX promoter activity increasing neuronal cell apoptosis. Negatively regulates BAX promoter activity in the absence of TP53. Acts as a transcriptional coactivator via its interaction with the transcription factor ESR1 by enhancing its effect on estrogen response element (ERE)-containing promoter. Antagonizes the transcriptional stimulatory activity of POU4F1 by preventing its binding to an octamer motif. Involved in TNFSF11-mediated terminal osteoclast differentiation. The protein is POU domain, class 4, transcription factor 2 of Rattus norvegicus (Rat).